The chain runs to 511 residues: 2,3-bisphosphoglycerate-independent phosphoglycerate mutase (511 aa).

2 residues coordinate Mn(2+): aspartate 14 and serine 64. The active-site Phosphoserine intermediate is serine 64. Residues histidine 125, 155–156, arginine 187, arginine 193, 259–262, and lysine 333 contribute to the substrate site; these read RD and RADR. Aspartate 400, histidine 404, aspartate 441, histidine 442, and histidine 460 together coordinate Mn(2+).

It belongs to the BPG-independent phosphoglycerate mutase family. As to quaternary structure, monomer. Requires Mn(2+) as cofactor.

The enzyme catalyses (2R)-2-phosphoglycerate = (2R)-3-phosphoglycerate. Its pathway is carbohydrate degradation; glycolysis; pyruvate from D-glyceraldehyde 3-phosphate: step 3/5. Functionally, catalyzes the interconversion of 2-phosphoglycerate and 3-phosphoglycerate. This is 2,3-bisphosphoglycerate-independent phosphoglycerate mutase from Idiomarina loihiensis (strain ATCC BAA-735 / DSM 15497 / L2-TR).